Consider the following 109-residue polypeptide: Large ribosomal subunit protein uL22 (109 aa).

It belongs to the universal ribosomal protein uL22 family. In terms of assembly, part of the 50S ribosomal subunit.

Its function is as follows. This protein binds specifically to 23S rRNA; its binding is stimulated by other ribosomal proteins, e.g. L4, L17, and L20. It is important during the early stages of 50S assembly. It makes multiple contacts with different domains of the 23S rRNA in the assembled 50S subunit and ribosome. In terms of biological role, the globular domain of the protein is located near the polypeptide exit tunnel on the outside of the subunit, while an extended beta-hairpin is found that lines the wall of the exit tunnel in the center of the 70S ribosome. This chain is Large ribosomal subunit protein uL22, found in Cupriavidus metallidurans (strain ATCC 43123 / DSM 2839 / NBRC 102507 / CH34) (Ralstonia metallidurans).